Reading from the N-terminus, the 295-residue chain is 33 kDa chaperonin (295 aa).

Intrachain disulfides connect Cys-238-Cys-240 and Cys-271-Cys-274.

The protein belongs to the HSP33 family. In terms of processing, under oxidizing conditions two disulfide bonds are formed involving the reactive cysteines. Under reducing conditions zinc is bound to the reactive cysteines and the protein is inactive.

The protein localises to the cytoplasm. Functionally, redox regulated molecular chaperone. Protects both thermally unfolding and oxidatively damaged proteins from irreversible aggregation. Plays an important role in the bacterial defense system toward oxidative stress. The polypeptide is 33 kDa chaperonin (Clostridium botulinum (strain Eklund 17B / Type B)).